The following is a 379-amino-acid chain: Acetylajmalan esterase 1 (379 aa).

Positions 1-20 (MGFAPLLVFSLFVFAGTTKG) are cleaved as a signal peptide. Ser-34 acts as the Nucleophile in catalysis. Residues Asn-96, Asn-178, Asn-197, and Asn-291 are each glycosylated (N-linked (GlcNAc...) asparagine). Catalysis depends on residues Asp-332 and His-335.

The protein belongs to the 'GDSL' lipolytic enzyme family. As to expression, expressed in roots and leaves at low levels.

It catalyses the reaction 17-O-acetylnorajmaline + H2O = norajmaline + acetate + H(+). The catalysed reaction is 17-O-acetylajmaline + H2O = ajmaline + acetate + H(+). Its pathway is alkaloid biosynthesis; ajmaline biosynthesis. Acetylesterase involved in the biosynthesis of ajmaline-type monoterpenoid indole alkaloids (MIAs) natural products, important plant-derived pharmaceuticals used in the therapy of heart disorders. Deacetylates 17-O-acetylnorajmaline to produce norajmaline. May also catalyze the conversion of 17-O-acetylajmaline to ajmaline. This Rauvolfia serpentina (Serpentine wood) protein is Acetylajmalan esterase 1.